A 421-amino-acid polypeptide reads, in one-letter code: Enolase (421 aa).

Q161 contacts (2R)-2-phosphoglycerate. Residue E203 is the Proton donor of the active site. The Mg(2+) site is built by D240, E283, and D310. Residues K335, R364, S365, and K386 each contribute to the (2R)-2-phosphoglycerate site. The active-site Proton acceptor is the K335.

Belongs to the enolase family. It depends on Mg(2+) as a cofactor.

It localises to the cytoplasm. Its subcellular location is the secreted. The protein resides in the cell surface. It catalyses the reaction (2R)-2-phosphoglycerate = phosphoenolpyruvate + H2O. The protein operates within carbohydrate degradation; glycolysis; pyruvate from D-glyceraldehyde 3-phosphate: step 4/5. Catalyzes the reversible conversion of 2-phosphoglycerate (2-PG) into phosphoenolpyruvate (PEP). It is essential for the degradation of carbohydrates via glycolysis. This chain is Enolase, found in Sulfurimonas denitrificans (strain ATCC 33889 / DSM 1251) (Thiomicrospira denitrificans (strain ATCC 33889 / DSM 1251)).